A 292-amino-acid chain; its full sequence is MHRSQPLPPPELRDCPAPAKLNLFLHVTGRRADGYHTLQTVFQLVDWCDTLHFRRRDDGVVARVTDVPGVPAETDLVVRAARALQAATGATFGADIAIDKVLPMGGGIGGGSSDAATTLLALNHLWGLGLARAELMRIGLALGADVPVFVLGQNAFAQGIGEDLTPVELPESWFVVIHPKQHVPTAEIFSDECLTRDTPLSIIAVFAARTNKFDFGRNDLEPIATAKFGEVARALAWLKQHNQHARMTGSGACVFARFPDAATAQQVLERLPPEWDGRCVRSLARHPLAALA.

The active site involves lysine 20. 103-113 serves as a coordination point for ATP; it reads PMGGGIGGGSS. Aspartate 145 is an active-site residue.

Belongs to the GHMP kinase family. IspE subfamily.

It carries out the reaction 4-CDP-2-C-methyl-D-erythritol + ATP = 4-CDP-2-C-methyl-D-erythritol 2-phosphate + ADP + H(+). It participates in isoprenoid biosynthesis; isopentenyl diphosphate biosynthesis via DXP pathway; isopentenyl diphosphate from 1-deoxy-D-xylulose 5-phosphate: step 3/6. Functionally, catalyzes the phosphorylation of the position 2 hydroxy group of 4-diphosphocytidyl-2C-methyl-D-erythritol. This is 4-diphosphocytidyl-2-C-methyl-D-erythritol kinase from Cupriavidus necator (strain ATCC 17699 / DSM 428 / KCTC 22496 / NCIMB 10442 / H16 / Stanier 337) (Ralstonia eutropha).